A 428-amino-acid polypeptide reads, in one-letter code: Histidine--tRNA ligase (428 aa).

It belongs to the class-II aminoacyl-tRNA synthetase family.

It is found in the cytoplasm. The enzyme catalyses tRNA(His) + L-histidine + ATP = L-histidyl-tRNA(His) + AMP + diphosphate + H(+). The sequence is that of Histidine--tRNA ligase from Sulfolobus acidocaldarius (strain ATCC 33909 / DSM 639 / JCM 8929 / NBRC 15157 / NCIMB 11770).